The sequence spans 396 residues: Tryptophan synthase beta chain (396 aa).

Lysine 86 is modified (N6-(pyridoxal phosphate)lysine).

This sequence belongs to the TrpB family. Tetramer of two alpha and two beta chains. Pyridoxal 5'-phosphate is required as a cofactor.

The catalysed reaction is (1S,2R)-1-C-(indol-3-yl)glycerol 3-phosphate + L-serine = D-glyceraldehyde 3-phosphate + L-tryptophan + H2O. The protein operates within amino-acid biosynthesis; L-tryptophan biosynthesis; L-tryptophan from chorismate: step 5/5. Its function is as follows. The beta subunit is responsible for the synthesis of L-tryptophan from indole and L-serine. This Sodalis glossinidius (strain morsitans) protein is Tryptophan synthase beta chain.